Reading from the N-terminus, the 300-residue chain is Cell adhesion molecule CEACAM19 (300 aa).

Positions methionine 1 to alanine 32 are cleaved as a signal peptide. Over alanine 33 to glycine 157 the chain is Extracellular. A glycan (N-linked (GlcNAc...) asparagine) is linked at asparagine 104. The chain crosses the membrane as a helical span at residues isoleucine 158–alanine 178. The Cytoplasmic segment spans residues tyrosine 179–serine 300. The tract at residues serine 259–alanine 291 is disordered.

It belongs to the immunoglobulin superfamily. CEA family. Ubiquitous with highest expression in prostate, uterus, fetal brain, mammary gland, adrenal gland, skeletal muscle, small intestine, and kidney, and lower expression in lung, cerebellum, testis, liver, pancreas, bone marrow and ovary.

The protein resides in the membrane. The polypeptide is Cell adhesion molecule CEACAM19 (Homo sapiens (Human)).